A 330-amino-acid polypeptide reads, in one-letter code: Polyprenol dehydrogenase (330 aa).

Residues Ile55, Tyr208, Lys212, and Thr245 each coordinate NAD(+). Tyr208 (proton acceptor) is an active-site residue.

It belongs to the short-chain dehydrogenases/reductases (SDR) family. Widely expressed. Highly expressed in the pancreas.

It localises to the lipid droplet. It is found in the secreted. It carries out the reaction a di-trans,poly-cis-polyprenol + NAD(+) = a di-trans,poly-cis-polyprenal + NADH + H(+). The enzyme catalyses a di-trans,poly-cis-polyprenol + NADP(+) = a di-trans,poly-cis-polyprenal + NADPH + H(+). The catalysed reaction is a di-trans,poly-cis-dolichol + NADP(+) = a di-trans,poly-cis-dolichal + NADPH + H(+). It catalyses the reaction a di-trans,poly-cis-dolichol + NAD(+) = a di-trans,poly-cis-dolichal + NADH + H(+). The protein operates within protein modification; protein glycosylation. In terms of biological role, oxidoreductase that plays a key role in early steps of protein N-linked glycosylation by mediating two non-consecutive steps in dolichol biosynthesis. Acts both as a NAD(+)-dependent dehydrogenase and as a NADPH-dependent reductase during the conversion of polyprenol into dolichol. First catalyzes the NAD(+)-dependent dehydrogenation of polyprenol into polyprenal; polyprenal is then reduced into dolichal by SRD5A3. It then catalyzes the NADPH-dependent reduction of dolichal into dolichol. May also acts as a positive regulator of starvation-induced autophagy. The sequence is that of Polyprenol dehydrogenase from Homo sapiens (Human).